Here is a 333-residue protein sequence, read N- to C-terminus: Quinolinate synthase (333 aa).

Positions 41 and 58 each coordinate iminosuccinate. A [4Fe-4S] cluster-binding site is contributed by Cys-103. Residues 129 to 131 (YIN) and Ser-146 each bind iminosuccinate. [4Fe-4S] cluster is bound at residue Cys-189. Iminosuccinate-binding positions include 215–217 (HPE) and Thr-232. Residue Cys-282 participates in [4Fe-4S] cluster binding.

This sequence belongs to the quinolinate synthase family. Type 2 subfamily. [4Fe-4S] cluster is required as a cofactor.

The protein localises to the cytoplasm. It carries out the reaction iminosuccinate + dihydroxyacetone phosphate = quinolinate + phosphate + 2 H2O + H(+). The protein operates within cofactor biosynthesis; NAD(+) biosynthesis; quinolinate from iminoaspartate: step 1/1. Catalyzes the condensation of iminoaspartate with dihydroxyacetone phosphate to form quinolinate. The polypeptide is Quinolinate synthase (Prochlorococcus marinus (strain MIT 9313)).